Consider the following 147-residue polypeptide: Plasminogen receptor (KT) (147 aa).

Residues 1–52 (MGFIFSKSMNENMKNQQEFMVMHARLQLERQLIMQNEMRERQMAMQIAWSRE) are Extracellular-facing. The chain crosses the membrane as a helical span at residues 53–73 (FLKYFGTFFGIATISLAAGAI). At 74–78 (KRKKP) the chain is on the cytoplasmic side. A helical transmembrane segment spans residues 79–99 (AFLIPIVPLSFIFTYQYDLGY). Topologically, residues 100–147 (GTLLQRMKSEAEDILETEKTKLELPKGLITFESLEKARREQSKFFSDK) are extracellular.

Interacts with PLAT. Interacts with PLAUR. In terms of tissue distribution, expressed in adrenal medulla (pheochromocytoma).

The protein resides in the cell membrane. Functionally, receptor for plasminogen. Regulates urokinase plasminogen activator-dependent and stimulates tissue-type plasminogen activator-dependent cell surface plasminogen activation. Proposed to be part of a local catecholaminergic cell plasminogen activation system that regulates neuroendocrine prohormone processing. Involved in regulation of inflammatory response; regulates monocyte chemotactic migration and matrix metalloproteinase activation, such as of MMP2 and MMP9. The chain is Plasminogen receptor (KT) (Plgrkt) from Rattus norvegicus (Rat).